Here is a 329-residue protein sequence, read N- to C-terminus: Deoxynucleotidyltransferase terminal-interacting protein 1 (329 aa).

Disordered stretches follow at residues 1-22 and 147-178; these read MGATGDAEQPRGPSGAERGGLE and KRGRQAEEECAHRGSPLPKKRKGRPPGHILSS. Residues 56 to 147 form an important for dimerization region; sequence MTTSFTDPAI…RLTHELPGIK (92 aa). Positions 147–158 are enriched in basic and acidic residues; the sequence is KRGRQAEEECAH. Residues 159 to 173 constitute a DNA-binding region (a.T hook); the sequence is RGSPLPKKRKGRPPG. S161 is modified (phosphoserine). Positions 164 to 170 match the Nuclear localization signal motif; sequence PKKRKGR. An important for DNA and nucleosome binding region spans residues 197–316; it reads REGPKWDPAR…MRKYMETLRT (120 aa). The H-T-H motif DNA-binding region spans 216-237; the sequence is GSRANKALGMGGTRGRIYIKHP.

In terms of assembly, monomer and homodimer. A minor proportion may form homotrimers. Interacts with ZNF541. Interacts with the terminal deoxynucleotidyltransferase DNTT. Interacts with TRERF1. Identified in a histone deacetylase complex that contains DNTTIP1, HDAC1 and MIDEAS; this complex assembles into a tetramer that contains four copies of each protein chain. Component of a histone deacetylase complex containing DNTTIP1, ZNF541, HDAC1 and HDAC2. Identified in a complex with KCTD19, HDAC1, HDAC2 and ZNF541.

Its subcellular location is the nucleus. Functionally, increases DNTT terminal deoxynucleotidyltransferase activity (in vitro). Also acts as a transcriptional regulator, binding to the consensus sequence 5'-GNTGCATG-3' following an AT-tract. Associates with RAB20 promoter and positively regulates its transcription. Binds DNA and nucleosomes; may recruit HDAC1 complexes to nucleosomes or naked DNA. This is Deoxynucleotidyltransferase terminal-interacting protein 1 (DNTTIP1) from Homo sapiens (Human).